Reading from the N-terminus, the 118-residue chain is Small ribosomal subunit protein bS6 (118 aa).

This sequence belongs to the bacterial ribosomal protein bS6 family.

Functionally, binds together with bS18 to 16S ribosomal RNA. This Orientia tsutsugamushi (strain Ikeda) (Rickettsia tsutsugamushi) protein is Small ribosomal subunit protein bS6.